Reading from the N-terminus, the 63-residue chain is Sec-independent protein translocase protein TatA (63 aa).

Residues 1-21 form a helical membrane-spanning segment; the sequence is MGGLSVGSVVLIALVALLIFG.

This sequence belongs to the TatA/E family. Forms a complex with TatC.

It localises to the cell membrane. Functionally, part of the twin-arginine translocation (Tat) system that transports large folded proteins containing a characteristic twin-arginine motif in their signal peptide across membranes. TatA could form the protein-conducting channel of the Tat system. This is Sec-independent protein translocase protein TatA from Shouchella clausii (strain KSM-K16) (Alkalihalobacillus clausii).